The chain runs to 157 residues: Endoribonuclease YbeY (157 aa).

The Zn(2+) site is built by histidine 118, histidine 122, and histidine 128.

This sequence belongs to the endoribonuclease YbeY family. The cofactor is Zn(2+).

It localises to the cytoplasm. Its function is as follows. Single strand-specific metallo-endoribonuclease involved in late-stage 70S ribosome quality control and in maturation of the 3' terminus of the 16S rRNA. This chain is Endoribonuclease YbeY, found in Bordetella bronchiseptica (strain ATCC BAA-588 / NCTC 13252 / RB50) (Alcaligenes bronchisepticus).